The following is a 201-amino-acid chain: Recombination protein RecR (201 aa).

The segment at 57-72 (CKLCQIYTEQPLCNIC) adopts a C4-type zinc-finger fold. The Toprim domain occupies 80–175 (TLLCVVESPA…KCSRIAHGVP (96 aa)).

The protein belongs to the RecR family.

Functionally, may play a role in DNA repair. It seems to be involved in an RecBC-independent recombinational process of DNA repair. It may act with RecF and RecO. This chain is Recombination protein RecR, found in Coxiella burnetii (strain RSA 493 / Nine Mile phase I).